The primary structure comprises 237 residues: Small ribosomal subunit protein eS4 (237 aa).

One can recognise an S4 RNA-binding domain in the interval 38 to 110; the sequence is LPLAVVVRDV…EAKYYDLKPI (73 aa).

It belongs to the eukaryotic ribosomal protein eS4 family.

The protein is Small ribosomal subunit protein eS4 of Pyrobaculum calidifontis (strain DSM 21063 / JCM 11548 / VA1).